The chain runs to 97 residues: Aspartyl/glutamyl-tRNA(Asn/Gln) amidotransferase subunit C (97 aa).

Belongs to the GatC family. As to quaternary structure, heterotrimer of A, B and C subunits.

The catalysed reaction is L-glutamyl-tRNA(Gln) + L-glutamine + ATP + H2O = L-glutaminyl-tRNA(Gln) + L-glutamate + ADP + phosphate + H(+). The enzyme catalyses L-aspartyl-tRNA(Asn) + L-glutamine + ATP + H2O = L-asparaginyl-tRNA(Asn) + L-glutamate + ADP + phosphate + 2 H(+). Functionally, allows the formation of correctly charged Asn-tRNA(Asn) or Gln-tRNA(Gln) through the transamidation of misacylated Asp-tRNA(Asn) or Glu-tRNA(Gln) in organisms which lack either or both of asparaginyl-tRNA or glutaminyl-tRNA synthetases. The reaction takes place in the presence of glutamine and ATP through an activated phospho-Asp-tRNA(Asn) or phospho-Glu-tRNA(Gln). This Thermosynechococcus vestitus (strain NIES-2133 / IAM M-273 / BP-1) protein is Aspartyl/glutamyl-tRNA(Asn/Gln) amidotransferase subunit C.